We begin with the raw amino-acid sequence, 188 residues long: Ribosomal RNA small subunit methyltransferase G (188 aa).

Residues Gly69, Phe74, Val119–Gln120, and Arg134 each bind S-adenosyl-L-methionine.

This sequence belongs to the methyltransferase superfamily. RNA methyltransferase RsmG family.

The protein resides in the cytoplasm. The catalysed reaction is guanosine(527) in 16S rRNA + S-adenosyl-L-methionine = N(7)-methylguanosine(527) in 16S rRNA + S-adenosyl-L-homocysteine. In terms of biological role, specifically methylates the N7 position of guanine in position 527 of 16S rRNA. In Campylobacter jejuni subsp. doylei (strain ATCC BAA-1458 / RM4099 / 269.97), this protein is Ribosomal RNA small subunit methyltransferase G.